The sequence spans 163 residues: Adenosine 5'-monophosphoramidase HINT2 (163 aa).

The N-terminal 17 residues, 1-17 (MAAAVLLAVGLRAARRT), are a transit peptide targeting the mitochondrion. Position 45 is an N6-succinyllysine (Lys-45). The HIT domain occupies 55-163 (IFSRILDRSL…GGRQLQWPPG (109 aa)). The AMP site is built by Ser-63 and Asp-80. Residue Lys-119 is modified to N6-acetyllysine. Lys-128 carries the N6-acetyllysine; alternate modification. At Lys-128 the chain carries N6-succinyllysine; alternate. Asn-136 contributes to the AMP binding site. N6-acetyllysine is present on Lys-139. Residues 142-145 (AQSV) and 149-151 (HIH) each bind AMP. The Histidine triad motif motif lies at 147 to 151 (HLHIH). His-149 (tele-AMP-histidine intermediate) is an active-site residue.

The protein belongs to the HINT family.

Its subcellular location is the mitochondrion. The enzyme catalyses adenosine 5'-phosphoramidate + H2O = AMP + NH4(+). Its function is as follows. Exhibits adenosine 5'-monophosphoramidase activity, hydrolyzing purine nucleotide phosphoramidates with a single phosphate group such as adenosine 5'monophosphoramidate (AMP-NH2) to yield AMP and NH2. Hydrolyzes adenosine 5'-O-p-nitrophenylphosphoramidate (AMP-pNA). May be involved in steroid biosynthesis. May play a role in apoptosis. This Mus musculus (Mouse) protein is Adenosine 5'-monophosphoramidase HINT2.